Reading from the N-terminus, the 729-residue chain is MSCCDLAAAGQLGKAGIMASDCEPALNQAESRNPTLERYLGALREAKNDSEQFAALLLVTKAVKAGDIDAKTRRRIFDAVGFTFPNRLLTTKEAPDGCPDHVLRALGVALLACFCSDPELASHPQVLNKIPILCTFLTARGDPDDAARRSMIDDTYQCLTAVAGTPRGPRHLIAGGTVSALCQAYLGHGYGFDQALALLVGLLAAAETQCWKEAEPDLLAVLRGLSEDFQRAEDASKFELCQLLPLFLPPTTVPPECHRDLQAGLARILGSKLSSWQRNPALKLAARLAHACGSDWIPVGSSGSKFLALLVNLACVEVRLALEETGTEVKEDVVTACYALMELGIQECTRCEQSLLKEPQKVQLVSIMKEAIGAVIHYLLRVGPEKQKEPFVFASVRILGAWLAEETSSLRKEVCQLLPFLVRYAKTLYEEAEEASDISQQVANLAISPTTPGPAWPGDALRLLLPGWCHLTVEDGPREILIKEGAPSLLCKYFLQQWELTSPGHDTSVLPDSVEIGLQTCCHIFLNLVVTAPGLIKRDACFTSLMNTLMTSLPSLVQQQGRLLLAANVATLGLLMARLLSTSPALQGTPASRGFFAAAILFLSQSHVARATPGSDQAVLALSPDYEGIWADLQELWFLGMQAFTGCVPLLPWLAPAALRSRWPQELLQLLGSVSPNSVKPEMVAAYQGVLVELARANRLCREAMRLQAGEETASHYRMAALEQCLSEP.

Serine 2 carries the N-acetylserine modification. At serine 2 the chain carries Phosphoserine. Residues cysteine 3 and cysteine 4 are each lipidated (S-palmitoyl cysteine). Arginine 75 bears the Asymmetric dimethylarginine mark. The residue at position 448 (serine 448) is a Phosphoserine.

Belongs to the neurochondrin family. Interacts with MCHR1. Interacts with SEMA4C. Interacts with DIAPH1 (via FH3 domain). Interacts with GRM5. Palmitoylated. Palmitoylation by ZDHHC1, ZDHHC3 and ZDHHC11 regulates the association of NCDN with endosome membranes. May also be palmitoylated by ZDHHC7. In terms of tissue distribution, expressed in brain and in peripheral nervous system (at protein level). Weakly expressed in neurites.

It is found in the cytoplasm. The protein localises to the cytosol. Its subcellular location is the endosome membrane. The protein resides in the cell projection. It localises to the dendrite. It is found in the postsynapse. In terms of biological role, probably involved in signal transduction, in the nervous system, via increasing cell surface localization of GRM5 and positively regulating its signaling. Required for the spatial learning process. Acts as a negative regulator of Ca(2+)-calmodulin-dependent protein kinase 2 (CaMK2) phosphorylation. May play a role in modulating melanin-concentrating hormone-mediated functions via its interaction with MCHR1 that interferes with G protein-coupled signal transduction. May be involved in bone metabolism. May also be involved in neurite outgrowth. In Rattus norvegicus (Rat), this protein is Neurochondrin (Ncdn).